The sequence spans 1123 residues: Phytochrome A (1123 aa).

Over residues 1–14 (MSSSRPSQSSTTSS) the composition is skewed to low complexity. The interval 1 to 20 (MSSSRPSQSSTTSSRSKHSA) is disordered. One can recognise a GAF domain in the interval 218–401 (SMERLCDTMV…VFAILVNKEL (184 aa)). Cys-323 serves as a coordination point for phytochromobilin. In terms of domain architecture, PAS 1 spans 617 to 687 (VTAEMVRLIE…KMLELALQGQ (71 aa)). In terms of domain architecture, PAC spans 690 to 746 (RNVEFEIKTHGPSRDSSPISLIVNACASKDVRDSVVGVCFIAQDITGQKSIMDKFTR). Residues 747 to 821 (IEGDYRAIIQ…KNQEAFVNFG (75 aa)) enclose the PAS 2 domain. One can recognise a Histidine kinase domain in the interval 901 to 1118 (YIRRQIRNPL…TFIISVELAV (218 aa)).

It belongs to the phytochrome family. As to quaternary structure, homodimer. In terms of processing, contains one covalently linked phytochromobilin chromophore.

Its function is as follows. Regulatory photoreceptor which exists in two forms that are reversibly interconvertible by light: the Pr form that absorbs maximally in the red region of the spectrum and the Pfr form that absorbs maximally in the far-red region. Photoconversion of Pr to Pfr induces an array of morphogenic responses, whereas reconversion of Pfr to Pr cancels the induction of those responses. Pfr controls the expression of a number of nuclear genes including those encoding the small subunit of ribulose-bisphosphate carboxylase, chlorophyll A/B binding protein, protochlorophyllide reductase, rRNA, etc. It also controls the expression of its own gene(s) in a negative feedback fashion. This Solanum tuberosum (Potato) protein is Phytochrome A (PHYA).